The following is a 187-amino-acid chain: MPKPKKGARFGGSASHQKAIFANLATALFEHGRITTTESKAKALRPYAEKLVTHAKAGTLAHRREVLKVIRNKDVVHTLFAEIGPFYADRDGGYTRIIKTVPRKGDNAPMAIIELVKEKTVTSEADRARRVKASQDAPAAAPAEENVVEAVEAEATDAEVENADAVVEAIEDETAADAPEAEEAKKD.

This sequence belongs to the bacterial ribosomal protein bL17 family. Part of the 50S ribosomal subunit. Contacts protein L32.

The protein is Large ribosomal subunit protein bL17 of Rhodococcus opacus (strain B4).